The primary structure comprises 42 residues: YLDHGLGAPAPYVDPLEPKREVDELADQMGFQEAYRRFYGTT.

The Gla domain maps to 1–40; it reads YLDHGLGAPAPYVDPLEPKREVDELADQMGFQEAYRRFYG. Residue Pro9 is modified to 4-hydroxyproline. Glu17, Glu21, and Asp23 together coordinate Ca(2+). 4-carboxyglutamate occurs at positions 17 and 21.

Belongs to the osteocalcin/matrix Gla protein family. Gamma-carboxyglutamic acid residues are formed by vitamin K dependent carboxylation. These residues are essential for the binding of calcium.

It localises to the secreted. Its function is as follows. The carboxylated form is one of the main organic components of the bone matrix, which constitutes 1-2% of the total bone protein: it acts as a negative regulator of bone formation and is required to limit bone formation without impairing bone resorption or mineralization. The carboxylated form binds strongly to apatite and calcium. Functionally, the uncarboxylated form acts as a hormone secreted by osteoblasts, which regulates different cellular processes, such as energy metabolism, male fertility and brain development. Regulates of energy metabolism by acting as a hormone favoring pancreatic beta-cell proliferation, insulin secretion and sensitivity and energy expenditure. Uncarboxylated osteocalcin hormone also promotes testosterone production in the testes: acts as a ligand for G protein-coupled receptor GPRC6A at the surface of Leydig cells, initiating a signaling response that promotes the expression of enzymes required for testosterone synthesis in a CREB-dependent manner. Also acts as a regulator of brain development: osteocalcin hormone crosses the blood-brain barrier and acts as a ligand for GPR158 on neurons, initiating a signaling response that prevents neuronal apoptosis in the hippocampus, favors the synthesis of all monoamine neurotransmitters and inhibits that of gamma-aminobutyric acid (GABA). Osteocalcin also crosses the placenta during pregnancy and maternal osteocalcin is required for fetal brain development. This Camelops hesternus (Western camel) protein is Osteocalcin.